Here is a 926-residue protein sequence, read N- to C-terminus: Ubiquitin carboxyl-terminal hydrolase 4 (926 aa).

The Rhodanese domain maps to Ser205–Val328. Ser443 carries the post-translational modification Phosphoserine. Positions Val562 to Val923 constitute a USP domain. Cys571 serves as the catalytic Nucleophile. His880 serves as the catalytic Proton acceptor.

It belongs to the peptidase C19 family. Interacts with BRO1, RFU1 and VPS32. Associates with the 26S proteasome.

The protein resides in the cytoplasm. The protein localises to the late endosome membrane. It carries out the reaction Thiol-dependent hydrolysis of ester, thioester, amide, peptide and isopeptide bonds formed by the C-terminal Gly of ubiquitin (a 76-residue protein attached to proteins as an intracellular targeting signal).. RFU1 is an inhibitor of deubiquitination activity. Ubiquitin thioesterase that acts at the late endosome/prevacuolar compartment to recover ubiquitin from ubiquitinated membrane proteins en route to the vacuole. Also removes ubiquitin from soluble proteins targeted to proteasomes. Is essential to maintain a normal level of free ubiquitin. Involved in the ammonium-induced down-regulation of the GAP1 permease and the UME3 destruction in response to oxidative stress. Has a role in the RAD9 checkpoint response to TOP1 poisons. Required for promoting coordination of DNA replication and avoids DNA overreplication. The sequence is that of Ubiquitin carboxyl-terminal hydrolase 4 (DOA4) from Saccharomyces cerevisiae (strain RM11-1a) (Baker's yeast).